The chain runs to 664 residues: ATP-dependent zinc metalloprotease FtsH (664 aa).

Residues 1–9 (MKQNIKRNW) lie on the Cytoplasmic side of the membrane. A helical membrane pass occupies residues 10-30 (IWILIVMIVIGIILYFSIRNL). At 31–136 (FSTKVAEWSI…KSVATPQPNP (106 aa)) the chain is on the extracellular side. A helical membrane pass occupies residues 137–157 (FLGILISSVPVLILIFVMVWI). The Cytoplasmic portion of the chain corresponds to 158–664 (YRSQVKMMNG…SLIEKTSKKE (507 aa)). ATP is bound at residue 229 to 236 (GPPGTGKT). Residue His-451 participates in Zn(2+) binding. Glu-452 is an active-site residue. 2 residues coordinate Zn(2+): His-455 and Asp-529. The segment covering 639–649 (IEEKDLSKNSE) has biased composition (basic and acidic residues). The tract at residues 639 to 664 (IEEKDLSKNSEDNNLDSLIEKTSKKE) is disordered.

The protein in the central section; belongs to the AAA ATPase family. It in the C-terminal section; belongs to the peptidase M41 family. In terms of assembly, homohexamer. Zn(2+) serves as cofactor.

The protein resides in the cell membrane. In terms of biological role, acts as a processive, ATP-dependent zinc metallopeptidase for both cytoplasmic and membrane proteins. Plays a role in the quality control of integral membrane proteins. This Mycoplasmopsis synoviae (strain 53) (Mycoplasma synoviae) protein is ATP-dependent zinc metalloprotease FtsH.